Reading from the N-terminus, the 138-residue chain is MRHRKAGRHLNRDNAHRKAMFKNLAAALFREEEIRTTVPKAKELRRVAEPLITLAKEDTTANRRLAFARLRDKEMVTKLFEELGPHFKERPGGYMRILRCGFRKGDGAPMALVQLVDREEAIAARRETEEDAEETAEA.

The protein belongs to the bacterial ribosomal protein bL17 family. Part of the 50S ribosomal subunit. Contacts protein L32.

This chain is Large ribosomal subunit protein bL17, found in Halorhodospira halophila (strain DSM 244 / SL1) (Ectothiorhodospira halophila (strain DSM 244 / SL1)).